The primary structure comprises 236 residues: Orotidine 5'-phosphate decarboxylase (236 aa).

Residues Asp14, Lys36, 63-72, Thr122, Arg183, Gln192, Gly212, and Arg213 each bind substrate; that span reads DLKFHDIPNT. Lys65 acts as the Proton donor in catalysis.

This sequence belongs to the OMP decarboxylase family. Type 1 subfamily. Homodimer.

It carries out the reaction orotidine 5'-phosphate + H(+) = UMP + CO2. The protein operates within pyrimidine metabolism; UMP biosynthesis via de novo pathway; UMP from orotate: step 2/2. Its function is as follows. Catalyzes the decarboxylation of orotidine 5'-monophosphate (OMP) to uridine 5'-monophosphate (UMP). The sequence is that of Orotidine 5'-phosphate decarboxylase from Chromohalobacter salexigens (strain ATCC BAA-138 / DSM 3043 / CIP 106854 / NCIMB 13768 / 1H11).